We begin with the raw amino-acid sequence, 106 residues long: Translation initiation factor 1A 2 (106 aa).

The tract at residues 1–24 (MRKRREGTANNSPTPEVTRVRTPR) is disordered. The S1-like domain occupies 18-92 (TRVRTPRKEN…SKADVIWKYT (75 aa)).

Belongs to the eIF-1A family.

In terms of biological role, seems to be required for maximal rate of protein biosynthesis. Enhances ribosome dissociation into subunits and stabilizes the binding of the initiator Met-tRNA(I) to 40 S ribosomal subunits. The protein is Translation initiation factor 1A 2 (eIF1A2) of Methanosarcina mazei (strain ATCC BAA-159 / DSM 3647 / Goe1 / Go1 / JCM 11833 / OCM 88) (Methanosarcina frisia).